The chain runs to 430 residues: ETS domain-containing protein Elk-4 (430 aa).

Positions 5–85 (ITLWQFLLQL…NGQKFVYKFV (81 aa)) form a DNA-binding region, ETS. Positions 116–127 (SKDVEYGGKERP) are enriched in basic and acidic residues. The disordered stretch occupies residues 116–138 (SKDVEYGGKERPPQPGAKTSSRN). Lysine 166 is covalently cross-linked (Glycyl lysine isopeptide (Lys-Gly) (interchain with G-Cter in SUMO2)). Disordered stretches follow at residues 245-279 (TTFN…DIDT) and 292-325 (PENL…KGLE). Over residues 249-272 (PTPPVPSTPLPLKEPPRTPSPPLS) the composition is skewed to pro residues. Positions 299-312 (PKNEDSALPEKDKT) are enriched in basic and acidic residues.

The protein belongs to the ETS family. In terms of assembly, interacts with SIRT7. Lung and liver.

The protein localises to the nucleus. Its function is as follows. Involved in both transcriptional activation and repression. Interaction with SIRT7 leads to recruitment and stabilization of SIRT7 at promoters, followed by deacetylation of histone H3 at 'Lys-18' (H3K18Ac) and subsequent transcription repression. Forms a ternary complex with the serum response factor (SRF). Requires DNA-bound SRF for ternary complex formation and makes extensive DNA contacts to the 5'side of SRF, but does not bind DNA autonomously. The polypeptide is ETS domain-containing protein Elk-4 (Elk4) (Mus musculus (Mouse)).